We begin with the raw amino-acid sequence, 582 residues long: Phosphoribosylaminoimidazole carboxylase (582 aa).

The 192-residue stretch at 114 to 305 (KKYLAERGVA…QFENHLRAIL (192 aa)) folds into the ATP-grasp domain. 143–200 (AGRLGLPLMLKAKTLAYDGRGNSPLKSASSGDIQASLKFLGDRPLYAEGWAPFVKEVA) provides a ligand contact to ATP.

It in the C-terminal section; belongs to the AIR carboxylase family. Class I subfamily.

The enzyme catalyses 5-amino-1-(5-phospho-D-ribosyl)imidazole-4-carboxylate + H(+) = 5-amino-1-(5-phospho-beta-D-ribosyl)imidazole + CO2. The protein operates within purine metabolism; IMP biosynthesis via de novo pathway; 5-amino-1-(5-phospho-D-ribosyl)imidazole-4-carboxylate from 5-amino-1-(5-phospho-D-ribosyl)imidazole (carboxylase route): step 1/1. In Cryptococcus neoformans var. neoformans serotype D (strain JEC21 / ATCC MYA-565) (Filobasidiella neoformans), this protein is Phosphoribosylaminoimidazole carboxylase (ADE2).